We begin with the raw amino-acid sequence, 536 residues long: Multicopper oxidase terE (536 aa).

The segment at 1 to 21 is disordered; that stretch reads MHWHGLSQSTAPFSDGSPQAS. 3 consecutive Plastocyanin-like domains span residues 1–67, 79–238, and 354–488; these read MHWH…VEEK, ERIL…LSYN, and TVQK…VWMM. The Cu cation site is built by His2, His4, His48, and His50. His397 is a binding site for Cu cation.

It belongs to the multicopper oxidase family.

It functions in the pathway secondary metabolite biosynthesis. Multicopper oxidase; part of the gene cluster that mediates the biosynthesis of terrein, a fungal metabolite with ecological, antimicrobial, antiproliferative, and antioxidative activities. The first step in the pathway is performed by the polyketide synthase terA that produces 4-hydroxy-6-methylpyranon (4-HMP), orsellinic acid (OA), and 2,3-dehydro-6-hydroxymellein (2,3-dehydro-6-HM) by condensing acetyl-CoA with two, three, or four malonyl-CoA units, respectively. 4-HMP and OA are not pathway intermediates, but are rather shunt or side products. 2,3-dehydro-6-HM is further converted to 6-hydroxymellein (6-HM) by the 6-hydroxymellein synthase terB. The monooxygenases terC and terD, the multicopper oxidase terE and the Kelch-like protein terF are then involved in the transformation of 6-HM to terrein. Even if they are co-regulated with the other terrein cluster genes, terH and terI seem to be dispensable for terrein production; whereas one or both of the 2 transporters terG and terJ are probably required for efficient secretion of metabolites. The chain is Multicopper oxidase terE from Aspergillus terreus (strain NIH 2624 / FGSC A1156).